The sequence spans 358 residues: Probable RNA methyltransferase MXAN_6459 (358 aa).

The active-site Proton acceptor is the E92. The region spanning 99 to 327 (FDEKYVICVS…PVARRYSGGK (229 aa)) is the Radical SAM core domain. Residues C106 and C333 are joined by a disulfide bond. C113, C117, and C120 together coordinate [4Fe-4S] cluster. S-adenosyl-L-methionine-binding positions include 160–161 (GE), S192, 215–217 (SVT), and D289. C333 acts as the S-methylcysteine intermediate in catalysis.

It belongs to the radical SAM superfamily. RlmN family. Requires [4Fe-4S] cluster as cofactor.

Its subcellular location is the cytoplasm. This chain is Probable RNA methyltransferase MXAN_6459, found in Myxococcus xanthus (strain DK1622).